We begin with the raw amino-acid sequence, 256 residues long: Thiazole synthase (256 aa).

Lys-98 functions as the Schiff-base intermediate with DXP in the catalytic mechanism. Residues Gly-159, 185–186 (AG), and 207–208 (NT) each bind 1-deoxy-D-xylulose 5-phosphate.

Belongs to the ThiG family. Homotetramer. Forms heterodimers with either ThiH or ThiS.

It localises to the cytoplasm. The enzyme catalyses [ThiS sulfur-carrier protein]-C-terminal-Gly-aminoethanethioate + 2-iminoacetate + 1-deoxy-D-xylulose 5-phosphate = [ThiS sulfur-carrier protein]-C-terminal Gly-Gly + 2-[(2R,5Z)-2-carboxy-4-methylthiazol-5(2H)-ylidene]ethyl phosphate + 2 H2O + H(+). It functions in the pathway cofactor biosynthesis; thiamine diphosphate biosynthesis. In terms of biological role, catalyzes the rearrangement of 1-deoxy-D-xylulose 5-phosphate (DXP) to produce the thiazole phosphate moiety of thiamine. Sulfur is provided by the thiocarboxylate moiety of the carrier protein ThiS. In vitro, sulfur can be provided by H(2)S. The polypeptide is Thiazole synthase (Syntrophobacter fumaroxidans (strain DSM 10017 / MPOB)).